A 106-amino-acid chain; its full sequence is Large ribosomal subunit protein eL36 (106 aa).

Basic and acidic residues predominate over residues 75-93 (VRQEKVGHSQESKEEERGD). Positions 75-106 (VRQEKVGHSQESKEEERGDVQCSPPDEGWWWY) are disordered.

It belongs to the eukaryotic ribosomal protein eL36 family.

The chain is Large ribosomal subunit protein eL36 (RPL36) from Daucus carota (Wild carrot).